Here is a 524-residue protein sequence, read N- to C-terminus: Ribonuclease Y (524 aa).

Residues 2 to 22 (GIVINLFLIIAASIVFFVVGF) traverse the membrane as a helical segment. In terms of domain architecture, KH spans 214-299 (ALSVVHIQSD…KAYQDAKKEI (86 aa)). Residues 340 to 432 (LLQHSREVAM…VDAANIVSLS (93 aa)) enclose the HD domain.

Belongs to the RNase Y family.

Its subcellular location is the cell membrane. Endoribonuclease that initiates mRNA decay. The polypeptide is Ribonuclease Y (Chlorobaculum tepidum (strain ATCC 49652 / DSM 12025 / NBRC 103806 / TLS) (Chlorobium tepidum)).